Here is a 362-residue protein sequence, read N- to C-terminus: GTP 3',8-cyclase (362 aa).

Residues 8–228 (SLGRPLRDLR…ARISSHWPID (221 aa)) form the Radical SAM core domain. Arg-17 provides a ligand contact to GTP. Residues Cys-24 and Cys-28 each coordinate [4Fe-4S] cluster. S-adenosyl-L-methionine is bound at residue Tyr-30. Residue Cys-31 coordinates [4Fe-4S] cluster. Position 71 (Arg-71) interacts with GTP. S-adenosyl-L-methionine is bound at residue Gly-75. Thr-102 is a GTP binding site. Ser-126 is a binding site for S-adenosyl-L-methionine. Lys-164 provides a ligand contact to GTP. Met-198 serves as a coordination point for S-adenosyl-L-methionine. Positions 262 and 265 each coordinate [4Fe-4S] cluster. 267-269 (RLR) is a GTP binding site. A [4Fe-4S] cluster-binding site is contributed by Cys-279. Positions 325 to 362 (ALDSDGSREDADESEASAVPGRSTHPGHRKVEMSYIGG) are disordered.

It belongs to the radical SAM superfamily. MoaA family. In terms of assembly, monomer and homodimer. Requires [4Fe-4S] cluster as cofactor.

It carries out the reaction GTP + AH2 + S-adenosyl-L-methionine = (8S)-3',8-cyclo-7,8-dihydroguanosine 5'-triphosphate + 5'-deoxyadenosine + L-methionine + A + H(+). The protein operates within cofactor biosynthesis; molybdopterin biosynthesis. Its function is as follows. Catalyzes the cyclization of GTP to (8S)-3',8-cyclo-7,8-dihydroguanosine 5'-triphosphate. This is GTP 3',8-cyclase from Acidothermus cellulolyticus (strain ATCC 43068 / DSM 8971 / 11B).